Consider the following 206-residue polypeptide: Elongation factor Ts (206 aa).

Residues 81–84 are involved in Mg(2+) ion dislocation from EF-Tu; sequence TDFV.

This sequence belongs to the EF-Ts family.

It is found in the cytoplasm. Its function is as follows. Associates with the EF-Tu.GDP complex and induces the exchange of GDP to GTP. It remains bound to the aminoacyl-tRNA.EF-Tu.GTP complex up to the GTP hydrolysis stage on the ribosome. In Maridesulfovibrio salexigens (strain ATCC 14822 / DSM 2638 / NCIMB 8403 / VKM B-1763) (Desulfovibrio salexigens), this protein is Elongation factor Ts.